The chain runs to 1388 residues: Endoribonuclease Dicer homolog 2 (1388 aa).

The region spanning 31–210 is the Helicase ATP-binding domain; the sequence is ALEKAIKQNT…DSYWKKIHEL (180 aa). 44–51 is a binding site for ATP; the sequence is LETGSGKT. The short motif at 152-155 is the DECH box element; that stretch reads DECH. One can recognise a Helicase C-terminal domain in the interval 380 to 544; that stretch reads LGYSSLENIR…PLPDDSDEPL (165 aa). Residues 559–645 enclose the Dicer dsRNA-binding fold domain; the sequence is SVSLIYHYCS…VPDMVVAETV (87 aa). One can recognise a PAZ domain in the interval 805–935; that stretch reads TSHEVLEKHE…LPPELCHVIL (131 aa). RNase III domains are found at residues 962-1113 and 1149-1296; these read AYNL…SEGG and VGYM…VDSG. Mg(2+) contacts are provided by Glu1188, Asp1282, and Glu1285. Residues 1315 to 1384 enclose the DRBM domain; that stretch reads TPETVKLHPV…YKEVLNLLKN (70 aa).

It belongs to the helicase family. Dicer subfamily. The cofactor is Mg(2+). Requires Mn(2+) as cofactor.

It localises to the nucleus. It is found in the cytoplasm. In terms of biological role, ribonuclease (RNase) III involved in RNA-mediated post-transcriptional gene silencing (PTGS). Involved in the processing of natural small interfering RNAs (nat-siRNAs, derived from cis-natural antisense transcripts) by cleaving small dsRNAs into 24 nucleotide nat-siRNAs. Plays an essential role in transitive silencing of transgenes by processing secondary siRNAs. This pathway, which requires DCL4 and RDR6, amplifies silencing by using the target RNA as substrate to generate secondary siRNAs, providing an efficient mechanism for long-distance silencing. May participate with DCL3 in the production of 24 nucleotide repeat-associated siRNAs (ra-siRNAs) which derive from heterochromatin and DNA repeats such as transposons. Plays a role in antiviral RNA silencing. Involved in the production of viral siRNAs derived from the turnip crinkle virus (TCV) and tobacco rattle virus (TRV). Targeted by the viral silencing suppressor (VSR) protein 2b of the cucumber mosaic virus (CMV) that inactivates DCL2 function in RNA silencing. Does not seem to be involved in microRNAs (miRNAs) processing. This is Endoribonuclease Dicer homolog 2 from Arabidopsis thaliana (Mouse-ear cress).